Here is a 98-residue protein sequence, read N- to C-terminus: C-X-C motif chemokine 10 (98 aa).

The first 21 residues, 1-21 (MNQTAILICCLVFLTLSGIQG), serve as a signal peptide directing secretion. Arg-26 carries the post-translational modification Citrulline. Cystine bridges form between Cys-30-Cys-57 and Cys-32-Cys-74.

This sequence belongs to the intercrine alpha (chemokine CxC) family.

The protein resides in the secreted. Functionally, chemotactic for monocytes and T-lymphocytes. Binds to CXCR3. This Macaca mulatta (Rhesus macaque) protein is C-X-C motif chemokine 10 (CXCL10).